The sequence spans 208 residues: Thymidylate kinase (208 aa).

Glycine 7 to threonine 14 provides a ligand contact to ATP.

This sequence belongs to the thymidylate kinase family.

The catalysed reaction is dTMP + ATP = dTDP + ADP. In terms of biological role, phosphorylation of dTMP to form dTDP in both de novo and salvage pathways of dTTP synthesis. In Xylella fastidiosa (strain 9a5c), this protein is Thymidylate kinase (tmk).